The chain runs to 605 residues: Elongation factor 4 (605 aa).

Positions 9 to 192 constitute a tr-type G domain; that stretch reads GMIRNFCIIA…AIVQRIPAPA (184 aa). Residues 21 to 26 and 139 to 142 contribute to the GTP site; these read DHGKST and NKID.

Belongs to the TRAFAC class translation factor GTPase superfamily. Classic translation factor GTPase family. LepA subfamily.

The protein resides in the cell inner membrane. It catalyses the reaction GTP + H2O = GDP + phosphate + H(+). Functionally, required for accurate and efficient protein synthesis under certain stress conditions. May act as a fidelity factor of the translation reaction, by catalyzing a one-codon backward translocation of tRNAs on improperly translocated ribosomes. Back-translocation proceeds from a post-translocation (POST) complex to a pre-translocation (PRE) complex, thus giving elongation factor G a second chance to translocate the tRNAs correctly. Binds to ribosomes in a GTP-dependent manner. In Chlorobaculum parvum (strain DSM 263 / NCIMB 8327) (Chlorobium vibrioforme subsp. thiosulfatophilum), this protein is Elongation factor 4.